A 379-amino-acid chain; its full sequence is Acetylornithine aminotransferase (379 aa).

Pyridoxal 5'-phosphate contacts are provided by residues 93–94 and Phe-120; that span reads GA. Arg-123 contacts N(2)-acetyl-L-ornithine. 205–208 serves as a coordination point for pyridoxal 5'-phosphate; it reads DEVQ. N6-(pyridoxal phosphate)lysine is present on Lys-234. A N(2)-acetyl-L-ornithine-binding site is contributed by Ser-262. Position 263 (Thr-263) interacts with pyridoxal 5'-phosphate.

Belongs to the class-III pyridoxal-phosphate-dependent aminotransferase family. ArgD subfamily. Homodimer. Pyridoxal 5'-phosphate serves as cofactor.

The protein resides in the cytoplasm. The catalysed reaction is N(2)-acetyl-L-ornithine + 2-oxoglutarate = N-acetyl-L-glutamate 5-semialdehyde + L-glutamate. It functions in the pathway amino-acid biosynthesis; L-arginine biosynthesis; N(2)-acetyl-L-ornithine from L-glutamate: step 4/4. The sequence is that of Acetylornithine aminotransferase from Streptococcus mutans serotype c (strain ATCC 700610 / UA159).